Here is a 279-residue protein sequence, read N- to C-terminus: Acetylglutamate kinase (279 aa).

Residues 64 to 65 (GG), Arg86, and Asn177 each bind substrate.

This sequence belongs to the acetylglutamate kinase family. ArgB subfamily.

Its subcellular location is the cytoplasm. The enzyme catalyses N-acetyl-L-glutamate + ATP = N-acetyl-L-glutamyl 5-phosphate + ADP. Its pathway is amino-acid biosynthesis; L-arginine biosynthesis; N(2)-acetyl-L-ornithine from L-glutamate: step 2/4. In terms of biological role, catalyzes the ATP-dependent phosphorylation of N-acetyl-L-glutamate. The sequence is that of Acetylglutamate kinase from Campylobacter jejuni subsp. jejuni serotype O:23/36 (strain 81-176).